The following is a 137-amino-acid chain: Protein PsiE homolog (137 aa).

4 helical membrane passes run 13-35, 55-77, 84-103, and 107-129; these read ILLR…AFLI, YYMT…IVKY, FPLR…FIIV, and SATS…FLAN.

It belongs to the PsiE family.

It is found in the cell membrane. In Listeria monocytogenes serotype 4b (strain F2365), this protein is Protein PsiE homolog.